The primary structure comprises 221 residues: Extracellular superoxide dismutase [Cu-Zn] (221 aa).

The N-terminal stretch at 1-19 is a signal peptide; sequence MKTRVVLILALSVCIEAAS. Asparagine 56 carries an N-linked (GlcNAc...) asparagine glycan. Residues histidine 70, histidine 72, and histidine 87 each contribute to the Cu cation site. An intrachain disulfide couples cysteine 81 to cysteine 170. Zn(2+) contacts are provided by histidine 87, histidine 95, histidine 104, and aspartate 107. Histidine 144 is a Cu cation binding site.

It belongs to the Cu-Zn superoxide dismutase family. It depends on Cu cation as a cofactor. The cofactor is Zn(2+). In terms of tissue distribution, isoform 2 is preferentially expressed in eggs.

It is found in the secreted. The protein resides in the extracellular space. The protein localises to the membrane. The catalysed reaction is 2 superoxide + 2 H(+) = H2O2 + O2. Functionally, protects cells against oxidative stress by converting superoxide radicals to hydrogen peroxide. Oxidative stress is involved in various biological dysfunctions and senescence. The sequence is that of Extracellular superoxide dismutase [Cu-Zn] (sod-4) from Caenorhabditis elegans.